We begin with the raw amino-acid sequence, 86 residues long: Large ribosomal subunit protein uL24c (86 aa).

Belongs to the universal ribosomal protein uL24 family. Part of the 50S ribosomal subunit.

It is found in the plastid. Its subcellular location is the chloroplast. Its function is as follows. One of two assembly initiator proteins, it binds directly to the 5'-end of the 23S rRNA, where it nucleates assembly of the 50S subunit. The polypeptide is Large ribosomal subunit protein uL24c (rpl24) (Heterosigma akashiwo (strain NIES-293 / 8280G21-1)).